A 502-amino-acid chain; its full sequence is RxLR effector protein BLN06 (502 aa).

A signal peptide spans 1-20; sequence MTLLHCWLLLVGHLASTAYA. N-linked (GlcNAc...) asparagine glycosylation is present at Asn38. Positions 50–53 match the dEER motif; sequence LEER.

This sequence belongs to the RxLR effector family.

Its subcellular location is the secreted. The protein resides in the host cell membrane. Functionally, secreted effector that triggers a robust hypersensitive response (HR) in Lactuca serriola LS102. The response to BLN06 was visible as chlorosis but not as strong necrosis. In Bremia lactucae (Lettuce downy mildew), this protein is RxLR effector protein BLN06.